The primary structure comprises 199 residues: MDNCVAAKIMDSNLSSQQQHFLQPHCFFPQNVQQLSPAEEQQASKAKPIKRQRSASPELMRCKRRLNFNGFGYSLPQQQPAAVARRNERERNRVKLVNLGFATLREHVPNGAANKKMSKVETLRSAVEYIRALQQLLDEHDAVSAAFQSGVLSPTISPNYSHDMNSMAGSPVSSYSSDEGSYDPLSPEEQELLDFTTWF.

Residues proline 37–serine 56 form a disordered region. The bHLH domain maps to alanine 81–leucine 133. Residues histidine 162–glutamate 179 show a composition bias toward polar residues. Positions histidine 162 to glutamate 189 are disordered.

Efficient DNA binding requires dimerization with another bHLH protein. Neuronal precursor cells.

It localises to the nucleus. Functionally, transcription factor that plays a key role in neuronal differentiation: acts as a pioneer transcription factor, accessing closed chromatin to allow other factors to bind and activate neural pathways. Directly binds the E box motif (5'-CANNTG-3') on promoters and promotes transcription of neuronal genes. The combination of three transcription factors, ASCL1, POU3F2/BRN2 and MYT1L, is sufficient to reprogram fibroblasts and other somatic cells into induced neuronal (iN) cells in vitro. The sequence is that of Achaete-scute homolog 1 (ascl1) from Xenopus laevis (African clawed frog).